The sequence spans 109 residues: Oncomodulin (109 aa).

Ser2 is subject to N-acetylserine. EF-hand domains are found at residues 39–74 and 78–109; these read MSAS…FESG and LTES…MVHS. Asp52, Asp54, Ser56, Tyr58, Glu63, Asp91, Asp93, Asp95, Lys97, and Glu102 together coordinate Ca(2+).

The protein belongs to the parvalbumin family. As to expression, abundant in the organ of Corti.

In terms of biological role, has some calmodulin-like activity with respect to enzyme activation and growth regulation. Binds two calcium ions. This Cavia porcellus (Guinea pig) protein is Oncomodulin (OCM).